A 738-amino-acid chain; its full sequence is Exocyst complex component 3 (738 aa).

Residues 28 to 91 (LEKVEQYRHR…DEVERLLRGV (64 aa)) adopt a coiled-coil conformation.

It belongs to the SEC6 family. The exocyst complex is composed of Sec3/Exoc1, Sec5/Exoc2, Sec6/Exoc3, Sec8/Exoc4, Sec10/Exoc5, Sec15/Exoc6, Exo70/Exoc7 and Exo84/Exoc8.

In terms of biological role, component of the exocyst complex involved in the docking of exocytic vesicles with fusion sites on the plasma membrane. This is Exocyst complex component 3 from Drosophila melanogaster (Fruit fly).